We begin with the raw amino-acid sequence, 199 residues long: uncharacterized protein (199 aa).

Residues 21–38 (ISPSATNFIVSLVIMILI) form a helical membrane-spanning segment.

The protein localises to the membrane. This is an uncharacterized protein from Saccharomyces cerevisiae (strain ATCC 204508 / S288c) (Baker's yeast).